The following is a 292-amino-acid chain: 4-hydroxy-tetrahydrodipicolinate synthase (292 aa).

Thr45 contacts pyruvate. The active-site Proton donor/acceptor is Tyr133. Catalysis depends on Lys161, which acts as the Schiff-base intermediate with substrate. Ile203 is a binding site for pyruvate.

This sequence belongs to the DapA family. Homotetramer; dimer of dimers.

It is found in the cytoplasm. It carries out the reaction L-aspartate 4-semialdehyde + pyruvate = (2S,4S)-4-hydroxy-2,3,4,5-tetrahydrodipicolinate + H2O + H(+). Its pathway is amino-acid biosynthesis; L-lysine biosynthesis via DAP pathway; (S)-tetrahydrodipicolinate from L-aspartate: step 3/4. Its function is as follows. Catalyzes the condensation of (S)-aspartate-beta-semialdehyde [(S)-ASA] and pyruvate to 4-hydroxy-tetrahydrodipicolinate (HTPA). In Vibrio vulnificus (strain CMCP6), this protein is 4-hydroxy-tetrahydrodipicolinate synthase.